Reading from the N-terminus, the 375-residue chain is Platelet-derived growth factor receptor-like protein (375 aa).

The first 21 residues, 1-21, serve as a signal peptide directing secretion; sequence MKVWLLLGLLLVHEALEDVTG. Residues 22 to 64 form a disordered region; sequence QHLPKNKRPKEPGENRIKPTNKKVKPKIPKIKDRDSADSTPKT. A compositionally biased stretch (basic residues) spans 40-50; sequence PTNKKVKPKIP. An Ig-like C2-type 1 domain is found at 62 to 159; sequence PKTQSIMMQV…GYICRKDETK (98 aa). Cysteines 96 and 143 form a disulfide. 2 N-linked (GlcNAc...) asparagine glycosylation sites follow: N132 and N219. The region spanning 272 to 375 is the Ig-like C2-type 2 domain; sequence PSTTILASSN…TTVATTVEFS (104 aa). The cysteines at positions 293 and 357 are disulfide-linked.

In terms of assembly, forms a complex composed of PDGFRL, TNK2 and GRB2.

The protein resides in the secreted. This is Platelet-derived growth factor receptor-like protein (PDGFRL) from Macaca fascicularis (Crab-eating macaque).